A 192-amino-acid polypeptide reads, in one-letter code: PTS-dependent dihydroxyacetone kinase, ADP-binding subunit DhaL (192 aa).

Residues 5–189 (DTTIEWLGKF…SAYLFETLLE (185 aa)) form the DhaL domain. Residues D29, D34, and D36 each contribute to the Mg(2+) site. ADP contacts are provided by residues 37-40 (HGAN), 78-79 (AS), G115, M124, R161, and 174-176 (DPG).

In terms of assembly, homodimer. The dihydroxyacetone kinase complex is composed of a homodimer of DhaM, a homodimer of DhaK and the subunit DhaL. Requires Mg(2+) as cofactor.

The protein localises to the cytoplasm. It carries out the reaction dihydroxyacetone + phosphoenolpyruvate = dihydroxyacetone phosphate + pyruvate. It participates in polyol metabolism; glycerol degradation. ADP-binding subunit of the dihydroxyacetone kinase, which is responsible for the phosphoenolpyruvate (PEP)-dependent phosphorylation of dihydroxyacetone. DhaL-ADP is converted to DhaL-ATP via a phosphoryl group transfer from DhaM and transmits it to dihydroxyacetone binds to DhaK. The chain is PTS-dependent dihydroxyacetone kinase, ADP-binding subunit DhaL from Lactococcus lactis subsp. lactis (strain IL1403) (Streptococcus lactis).